Reading from the N-terminus, the 334-residue chain is Mevalonate kinase (334 aa).

110–120 is a binding site for ATP; sequence PVGAGLGSSAA. Aspartate 161 (proton acceptor) is an active-site residue.

This sequence belongs to the GHMP kinase family. Mevalonate kinase subfamily. In terms of assembly, homodimer. The cofactor is Mg(2+).

The protein resides in the cytoplasm. It catalyses the reaction (R)-mevalonate + ATP = (R)-5-phosphomevalonate + ADP + H(+). The protein operates within isoprenoid biosynthesis; isopentenyl diphosphate biosynthesis via mevalonate pathway; isopentenyl diphosphate from (R)-mevalonate: step 1/3. Catalyzes the phosphorylation of (R)-mevalonate (MVA) to (R)-mevalonate 5-phosphate (MVAP). Functions in the mevalonate (MVA) pathway leading to isopentenyl diphosphate (IPP), a key precursor for the biosynthesis of isoprenoid compounds such as archaeal membrane lipids. The sequence is that of Mevalonate kinase from Thermococcus gammatolerans (strain DSM 15229 / JCM 11827 / EJ3).